Consider the following 352-residue polypeptide: Popeye domain-containing protein 1 (352 aa).

Topologically, residues 1–38 (MSNTTSALPSSVPAVSLDPNATLCQDWEQSHHLLFHLA) are extracellular. 2 N-linked (GlcNAc...) asparagine glycosylation sites follow: Asn3 and Asn20. A helical membrane pass occupies residues 39–59 (NLSLGLGFLIPTTLALHMIFL). Position 60 (Arg60) is a topological domain, cytoplasmic. A helical membrane pass occupies residues 61–81 (LLLMTGCSLFIAWATLYRCTL). Residue Asp82 is a topological domain, extracellular. The helical transmembrane segment at 83 to 103 (VMVWNVVFLLVNFMHFFFLLY) threads the bilayer. Residues 104–352 (KRRPIKIDRE…NVSKTTKKDI (249 aa)) are Cytoplasmic-facing. The disordered stretch occupies residues 299–352 (ILRGGSTGSSLQKNPLTKTSTTMKPIEEGLEDDVFESESPTTSQNVSKTTKKDI). 2 stretches are compositionally biased toward polar residues: residues 306-321 (GSSL…STTM) and 336-346 (ESPTTSQNVSK).

Belongs to the popeye family. In terms of tissue distribution, expressed in skeletal muscle (at protein level).

It is found in the lateral cell membrane. The protein localises to the cell junction. Its subcellular location is the tight junction. The protein resides in the membrane. It localises to the cell membrane. It is found in the sarcolemma. The protein localises to the caveola. Cell adhesion molecule involved in the establishment and/or maintenance of cell integrity. Involved in skeletal muscle and heart development as well as in the maintenance of heart function. May play a role in vamp3-mediated vesicular transport and recycling of receptor molecules. Involved in the formation and regulation of the tight junction (TJ) paracellular permeability barrier in epithelial cells. May induce primordial adhesive contact and aggregation of epithelial cells in a Ca(2+)-independent manner. May be involved in epithelial movement during corneal sheet formation and regeneration. May play a role in the regulation of cell shape and movement by modulating the Rho-GTPase activity. May also be involved in striated muscle regeneration and in the regulation of cell spreading. In Danio rerio (Zebrafish), this protein is Popeye domain-containing protein 1 (popdc1).